We begin with the raw amino-acid sequence, 437 residues long: D-aminoacyl-tRNA deacylase (437 aa).

The protein belongs to the DtdA deacylase family. As to quaternary structure, monomer. It depends on Zn(2+) as a cofactor.

It carries out the reaction a D-aminoacyl-tRNA + H2O = a tRNA + a D-alpha-amino acid + H(+). The catalysed reaction is glycyl-tRNA(Ala) + H2O = tRNA(Ala) + glycine + H(+). Its function is as follows. D-aminoacyl-tRNA deacylase with broad substrate specificity. By recycling D-aminoacyl-tRNA to D-amino acids and free tRNA molecules, this enzyme counteracts the toxicity associated with the formation of D-aminoacyl-tRNA entities in vivo. In Methanoculleus marisnigri (strain ATCC 35101 / DSM 1498 / JR1), this protein is D-aminoacyl-tRNA deacylase.